Reading from the N-terminus, the 90-residue chain is Small ribosomal subunit protein bS16 (90 aa).

This sequence belongs to the bacterial ribosomal protein bS16 family.

This chain is Small ribosomal subunit protein bS16, found in Moorella thermoacetica (strain ATCC 39073 / JCM 9320).